Here is a 186-residue protein sequence, read N- to C-terminus: Large ribosomal subunit protein uL10 (186 aa).

It belongs to the universal ribosomal protein uL10 family. As to quaternary structure, part of the ribosomal stalk of the 50S ribosomal subunit. The N-terminus interacts with L11 and the large rRNA to form the base of the stalk. The C-terminus forms an elongated spine to which L12 dimers bind in a sequential fashion forming a multimeric L10(L12)X complex.

Functionally, forms part of the ribosomal stalk, playing a central role in the interaction of the ribosome with GTP-bound translation factors. The polypeptide is Large ribosomal subunit protein uL10 (Roseiflexus sp. (strain RS-1)).